We begin with the raw amino-acid sequence, 237 residues long: NAD(P)H-quinone oxidoreductase subunit K, chloroplastic (237 aa).

4 residues coordinate [4Fe-4S] cluster: Cys-55, Cys-56, Cys-120, and Cys-151.

This sequence belongs to the complex I 20 kDa subunit family. NDH is composed of at least 16 different subunits, 5 of which are encoded in the nucleus. [4Fe-4S] cluster serves as cofactor.

The protein resides in the plastid. Its subcellular location is the chloroplast thylakoid membrane. It carries out the reaction a plastoquinone + NADH + (n+1) H(+)(in) = a plastoquinol + NAD(+) + n H(+)(out). The enzyme catalyses a plastoquinone + NADPH + (n+1) H(+)(in) = a plastoquinol + NADP(+) + n H(+)(out). Its function is as follows. NDH shuttles electrons from NAD(P)H:plastoquinone, via FMN and iron-sulfur (Fe-S) centers, to quinones in the photosynthetic chain and possibly in a chloroplast respiratory chain. The immediate electron acceptor for the enzyme in this species is believed to be plastoquinone. Couples the redox reaction to proton translocation, and thus conserves the redox energy in a proton gradient. In Nephroselmis olivacea (Green alga), this protein is NAD(P)H-quinone oxidoreductase subunit K, chloroplastic.